The primary structure comprises 125 residues: Small ribosomal subunit protein bS6 (125 aa).

Positions 96 to 125 (ETGASSMMKTVEREEARKASQAEFAAANER) are disordered. Positions 105–115 (TVEREEARKAS) are enriched in basic and acidic residues.

It belongs to the bacterial ribosomal protein bS6 family.

Functionally, binds together with bS18 to 16S ribosomal RNA. This Paracidovorax citrulli (strain AAC00-1) (Acidovorax citrulli) protein is Small ribosomal subunit protein bS6.